A 204-amino-acid polypeptide reads, in one-letter code: Large ribosomal subunit protein bL25 (204 aa).

The protein belongs to the bacterial ribosomal protein bL25 family. CTC subfamily. Part of the 50S ribosomal subunit; part of the 5S rRNA/L5/L18/L25 subcomplex. Contacts the 5S rRNA. Binds to the 5S rRNA independently of L5 and L18.

Functionally, this is one of the proteins that binds to the 5S RNA in the ribosome where it forms part of the central protuberance. This is Large ribosomal subunit protein bL25 from Bordetella bronchiseptica (strain ATCC BAA-588 / NCTC 13252 / RB50) (Alcaligenes bronchisepticus).